Here is a 439-residue protein sequence, read N- to C-terminus: Sequestosome-1 (439 aa).

Residue A2 is modified to N-acetylalanine. Residues 2 to 48 (ASLTVKAYLLGKEEAAREIRRFSFCFSPEPEAEAAAGPGPCERLLSR) are interaction with LCK. One can recognise a PB1 domain in the interval 3 to 100 (SLTVKAYLLG…DIFRIYIKEK (98 aa)). Phosphoserine is present on S24. An interaction with PRKCZ and dimerization region spans residues 41–105 (PCERLLSRVA…YIKEKKECRR (65 aa)). Residues 48-78 (RVAVLFPALRPGGFQAHYRDEDGDLVAFSSD) are interaction with PAWR. Residues 119–221 (VHPNVICDGC…DGRPCPTAES (103 aa)) are interaction with GABRR3. The ZZ-type zinc-finger motif lies at 120–170 (HPNVICDGCNGPVVGTRYKCSVCPDYDLCSVCEGKGLHREHSKLIFPNPFG). Positions 125, 128, 139, and 142 each coordinate Zn(2+). Y145 carries the phosphotyrosine modification. Residues C148, C151, H157, and H160 each contribute to the Zn(2+) site. Positions 167–217 (NPFGHLSDSFSHSRWLRKLKHGHFGWPGWEMGPPGNWSPRPPRAGDGRPCP) are LIM protein-binding. 3 positions are modified to phosphoserine: S173, S175, and S204. The tract at residues 201-231 (GNWSPRPPRAGDGRPCPTAESASAPSEDPNV) is disordered. Residues 225–230 (PSEDPN) carry the TRAF6-binding motif. 2 positions are modified to phosphoserine: S246 and S263. Residues 259–389 (GGKRSRLTPT…ALYPHLPPEA (131 aa)) form a disordered region. A compositionally biased stretch (polar residues) spans 265–292 (LTPTSAESSSTGTEDKSGTQPSSCSSEV). T266 bears the Phosphothreonine mark. Residues 266-439 (TPTSAESSST…IQYSKHPPPL (174 aa)) are interaction with NTRK1. Phosphoserine occurs at positions 269 and 281. The S-palmitoyl cysteine moiety is linked to residue C288. Phosphoserine is present on residues S305, S327, and S331. The segment at 320–341 (QPEELMESDNCSGGDDDWTHLS) is MAP1LC3B-binding. The short motif at 335-340 (DDWTHL) is the LIR element. Residues 336 to 346 (DWTHLSSKEVD) are compositionally biased toward basic and acidic residues. Positions 346–351 (DPSTGE) are interaction with KEAP1. Phosphoserine occurs at positions 348, 354, 360, 364, and 365. Over residues 350-372 (GELQSLQMPESEGPSSLDPSQEG) the composition is skewed to polar residues. A UBA domain is found at 388-433 (EADPRLIESLSQMLSMGFSDEGGWLTRLLQTKNYDIGAALDTIQYS). Position 402 is a phosphoserine; by ULK1 and TBK1 (S402). S406 carries the phosphoserine modification. K419 and K434 each carry N6-acetyllysine; alternate. Residue K419 forms a Glycyl lysine isopeptide (Lys-Gly) (interchain with G-Cter in ubiquitin); alternate linkage. Residue K434 forms a Glycyl lysine isopeptide (Lys-Gly) (interchain with G-Cter in SUMO2); alternate linkage.

As to quaternary structure, homooligomer or heterooligomer; may form homotypic arrays. Dimerization interferes with ubiquitin binding. Component of a ternary complex with PAWR and PRKCZ. Forms a complex with JUB/Ajuba, PRKCZ and TRAF6. Identified in a complex with TRAF6 and CYLD. Identified in a heterotrimeric complex with ubiquitin and ZFAND5, where ZFAND5 and SQSTM1 both interact with the same ubiquitin molecule. Interacts (via LIR motif) with MAP1LC3A and MAP1LC3B, as well as with other ATG8 family members, including GABARAP, GABARAPL1 and GABARAPL2; these interactions are necessary for the recruitment MAP1 LC3 family members to inclusion bodies containing polyubiquitinated protein aggregates and for their degradation by autophagy. Interacts directly with PRKCI and PRKCZ. Interacts with EBI3, LCK, RASA1, NR2F2, NTRK1, NTRK2, NTRK3, NBR1, MAP2K5 and MAPKAPK5. Upon TNF-alpha stimulation, interacts with RIPK1 probably bridging IKBKB to the TNF-R1 complex composed of TNF-R1/TNFRSF1A, TRADD and RIPK1. Interacts with the proteasome subunits PSMD4 and PSMC2. Interacts with TRAF6. Interacts with 'Lys-63'-linked polyubiquitinated MAPT/TAU. Interacts with FHOD3. Interacts with CYLD. Interacts with SESN1. Interacts with SESN2. Interacts with ULK1. Interacts with UBD. Interacts with WDR81; the interaction is direct and regulates the interaction of SQSTM1 with ubiquitinated proteins. Interacts with WDFY3; this interaction is required to recruit WDFY3 to cytoplasmic bodies and to PML bodies. Interacts with LRRC25. Interacts with STING1; leading to relocalization of STING1 to autophagosomes. Interacts (when phosphorylated at Ser-348) with KEAP1; the interaction is direct and inactivates the BCR(KEAP1) complex by sequestering KEAP1 in inclusion bodies, promoting its degradation. Interacts with MOAP1; promoting dissociation of SQSTM1 inclusion bodies that sequester KEAP1. Interacts with GBP1. Interacts with TAX1BP1. Interacts with (ubiquitinated) PEX5; specifically binds PEX5 ubiquitinated at 'Lys-209' in response to reactive oxygen species (ROS). Interacts (via PB1 domain) with TNS2; the interaction leads to sequestration of TNS2 in cytoplasmic aggregates with SQSTM1 and promotes TNS2 ubiquitination and proteasomal degradation. Interacts with IRS1; the interaction is disrupted by the presence of tensin TNS2. Interacts with TRIM5. Interacts with TRIM11 (when ubiquitinated); promoting AIM2 recruitment to autophagosomes and autophagy-dependent degradation of AIM2. Interacts with TRIM13. Interacts with TRIM16. Interacts with TRIM23. Interacts with TRIM50. Interacts with TRIM55. Interacts with ECSIT; this interaction inhibits TLR4 signaling via functional regulation of the TRAF6-ECSIT complex. Interacts with GABRR1, GABRR2 and GABRR3. Interacts with WDR83. Interacts with GRB2. Interacts with USP12; the interaction is independent of USP12 deubiquitinase activity and may be involved in regulation of autophagic flux. Interacts with ASB6. Post-translationally, phosphorylated. Phosphorylation at Ser-406 by ULK1 destabilizes the UBA dimer interface and increases binding affinity to ubiquitinated proteins. Phosphorylation at Ser-406 also primes for subsequent phosphorylation at Ser-402. Phosphorylation at Ser-402 by CK2 or ULK1 promotes binding to ubiquitinated proteins by increasing the affinity between the UBA domain and polyubiquitin chains. Phosphorylation at Ser-402 by ULK1 is stimulated by SESN2. Phosphorylated at Ser-402 by TBK1, leading to promote relocalization of 'Lys-63'-linked ubiquitinated STING1 to autophagosomes. Phosphorylation at Ser-348 by ULK1 promotes interaction with KEAP1 and inactivation of the BCR(KEAP1) complex, promoting NFE2L2/NRF2 nuclear accumulation and expression of phase II detoxifying enzymes. Phosphorylated in vitro by TTN. In terms of processing, ubiquitinated by UBE2J1 and RNF26 at Lys-434: ubiquitinated SQSTM1 attracts specific vesicle-associated adapters, forming a molecular bridge that restrains cognate vesicles in the perinuclear region and organizes the endosomal pathway for efficient cargo transport. Ubiquitination by UBE2D2 and UBE2D3 increases its ability to bind polyubiquitin chains by destabilizing the UBA dimer interface. Deubiquitination by USP15 releases target vesicles for fast transport into the cell periphery. Ubiquitinated by the BCR(KEAP1) complex at Lys-419, increasing SQSTM1 sequestering activity and promoting its degradation. Ubiquitinated via 'Lys-29' and 'Lys-33'-linked polyubiquitination leading to xenophagic targeting of bacteria and inhibition of their replication. Acetylated at Lys-419 and Lys-434 by KAT5/TIP60, promotes activity by destabilizing the UBA dimer interface and increases binding affinity to ubiquitinated proteins. Deacetylated by HDAC6. Post-translationally, palmitoylation at Cys-288 by ZDHHC19 is required for efficient autophagic degradation of SQSTM1-cargo complexes by promoting affinity for ATG8 proteins and recruitment of p62 bodies to autophagosomes. Dealmitoylated at Cys-288 by LYPLA1. In terms of tissue distribution, ubiquitously expressed. In brain, mainly expressed by neurons, especially pyramidal neurons in the cerebral cortex and hippocampus. Also expressed by Purkinje cells and neurons in the dentate nucleus of the cerebellum and neurons of the basal ganglia (at protein level).

The protein resides in the cytoplasmic vesicle. The protein localises to the autophagosome. It localises to the preautophagosomal structure. It is found in the cytoplasm. Its subcellular location is the cytosol. The protein resides in the nucleus. The protein localises to the PML body. It localises to the late endosome. It is found in the lysosome. Its subcellular location is the endoplasmic reticulum. The protein resides in the myofibril. The protein localises to the sarcomere. In terms of biological role, molecular adapter required for selective macroautophagy (aggrephagy) by acting as a bridge between polyubiquitinated proteins and autophagosomes. Promotes the recruitment of ubiquitinated cargo proteins to autophagosomes via multiple domains that bridge proteins and organelles in different steps. SQSTM1 first mediates the assembly and removal of ubiquitinated proteins by undergoing liquid-liquid phase separation upon binding to ubiquitinated proteins via its UBA domain, leading to the formation of insoluble cytoplasmic inclusions, known as p62 bodies. SQSTM1 then interacts with ATG8 family proteins on autophagosomes via its LIR motif, leading to p62 body recruitment to autophagosomes, followed by autophagic clearance of ubiquitinated proteins. SQSTM1 is itself degraded along with its ubiquitinated cargos. Also required to recruit ubiquitinated proteins to PML bodies in the nucleus. Also involved in autophagy of peroxisomes (pexophagy) in response to reactive oxygen species (ROS) by acting as a bridge between ubiquitinated PEX5 receptor and autophagosomes. Acts as an activator of the NFE2L2/NRF2 pathway via interaction with KEAP1: interaction inactivates the BCR(KEAP1) complex by sequestering the complex in inclusion bodies, promoting nuclear accumulation of NFE2L2/NRF2 and subsequent expression of cytoprotective genes. Promotes relocalization of 'Lys-63'-linked ubiquitinated STING1 to autophagosomes. Involved in endosome organization by retaining vesicles in the perinuclear cloud: following ubiquitination by RNF26, attracts specific vesicle-associated adapters, forming a molecular bridge that restrains cognate vesicles in the perinuclear region and organizes the endosomal pathway for efficient cargo transport. Sequesters tensin TNS2 into cytoplasmic puncta, promoting TNS2 ubiquitination and proteasomal degradation. May regulate the activation of NFKB1 by TNF-alpha, nerve growth factor (NGF) and interleukin-1. May play a role in titin/TTN downstream signaling in muscle cells. Adapter that mediates the interaction between TRAF6 and CYLD. More potent than isoform 2 to stimulate PRKCZ-dependent phosphorylation of KCNAB2. The sequence is that of Sequestosome-1 (Sqstm1) from Rattus norvegicus (Rat).